We begin with the raw amino-acid sequence, 88 residues long: UPF0223 protein YktA (88 aa).

Belongs to the UPF0223 family.

This is UPF0223 protein YktA (yktA) from Bacillus subtilis (strain 168).